The following is a 26-amino-acid chain: Delta-hemolysin (26 aa).

The residue at position 1 (methionine 1) is an N-formylmethionine.

This sequence belongs to the delta-lysin family.

Its subcellular location is the secreted. The protein localises to the host cell membrane. Lyses erythrocytes and many other mammalian cells. The chain is Delta-hemolysin (hld) from Staphylococcus aureus (strain MSSA476).